Reading from the N-terminus, the 258-residue chain is Tropinone reductase-like 3 (258 aa).

19–43 (IVTASTQGIGFAIAYRLGLEGAAVV) lines the NAD(+) pocket. Ser150 contributes to the substrate binding site. Tyr163 acts as the Proton acceptor in catalysis.

This sequence belongs to the short-chain dehydrogenases/reductases (SDR) family.

In terms of biological role, has no tropinone reductase activity. The polypeptide is Tropinone reductase-like 3 (Erythroxylum coca (Coca plant)).